Here is a 359-residue protein sequence, read N- to C-terminus: tRNA-specific 2-thiouridylase MnmA (359 aa).

Residues 6 to 13 (AMSGGVDS) and L32 each bind ATP. The active-site Nucleophile is the C101. An intrachain disulfide couples C101 to C193. Position 125 (G125) interacts with ATP. Residues 143 to 145 (KDQ) form an interaction with tRNA region. The active-site Cysteine persulfide intermediate is the C193.

The protein belongs to the MnmA/TRMU family.

It is found in the cytoplasm. It carries out the reaction S-sulfanyl-L-cysteinyl-[protein] + uridine(34) in tRNA + AH2 + ATP = 2-thiouridine(34) in tRNA + L-cysteinyl-[protein] + A + AMP + diphosphate + H(+). Functionally, catalyzes the 2-thiolation of uridine at the wobble position (U34) of tRNA, leading to the formation of s(2)U34. The polypeptide is tRNA-specific 2-thiouridylase MnmA (Mycobacterium sp. (strain KMS)).